The sequence spans 238 residues: Photosynthetic NDH subunit of lumenal location 1, chloroplastic (238 aa).

The protein belongs to the PsbP family. Part of the chloroplast NDH complex, composed of a mixture of chloroplast and nucleus encoded subunits. Component of the NDH lumenal subcomplex, at least composed of PnsL1, PnsL2, PnsL3, PnsL4 and PnsL5.

Its subcellular location is the plastid. It is found in the chloroplast thylakoid membrane. Its function is as follows. NDH shuttles electrons from NAD(P)H:plastoquinone, via FMN and iron-sulfur (Fe-S) centers, to quinones in the photosynthetic chain and possibly in a chloroplast respiratory chain. The immediate electron acceptor for the enzyme in this species is believed to be plastoquinone. Couples the redox reaction to proton translocation, and thus conserves the redox energy in a proton gradient. Required for accumulation of the chloroplast NAD(P)H dehydrogenase (NDH) complex. This Arabidopsis thaliana (Mouse-ear cress) protein is Photosynthetic NDH subunit of lumenal location 1, chloroplastic.